A 481-amino-acid chain; its full sequence is tRNA-2-methylthio-N(6)-dimethylallyladenosine synthase (481 aa).

The MTTase N-terminal domain maps to 24 to 140 (RKLFIESYGC…LPNLINEVEE (117 aa)). [4Fe-4S] cluster contacts are provided by Cys-33, Cys-69, Cys-103, Cys-178, Cys-182, and Cys-185. Positions 164-410 (QSNGVSAFVS…VDLQQKHSKQ (247 aa)) constitute a Radical SAM core domain. Positions 413–476 (NSVIGTTVEV…SATLIGEPIG (64 aa)) constitute a TRAM domain.

This sequence belongs to the methylthiotransferase family. MiaB subfamily. In terms of assembly, monomer. [4Fe-4S] cluster serves as cofactor.

It localises to the cytoplasm. It carries out the reaction N(6)-dimethylallyladenosine(37) in tRNA + (sulfur carrier)-SH + AH2 + 2 S-adenosyl-L-methionine = 2-methylsulfanyl-N(6)-dimethylallyladenosine(37) in tRNA + (sulfur carrier)-H + 5'-deoxyadenosine + L-methionine + A + S-adenosyl-L-homocysteine + 2 H(+). Functionally, catalyzes the methylthiolation of N6-(dimethylallyl)adenosine (i(6)A), leading to the formation of 2-methylthio-N6-(dimethylallyl)adenosine (ms(2)i(6)A) at position 37 in tRNAs that read codons beginning with uridine. In Christiangramia forsetii (strain DSM 17595 / CGMCC 1.15422 / KT0803) (Gramella forsetii), this protein is tRNA-2-methylthio-N(6)-dimethylallyladenosine synthase.